The chain runs to 935 residues: Lon protease homolog 2, peroxisomal (935 aa).

Residues 12–296 (LPVHRLERNL…NLRRLVEEMG (285 aa)) form the Lon N-terminal domain. ATP is bound at residue 452 to 459 (GPPGVGKT). One can recognise a Lon proteolytic domain in the interval 692-922 (QKGYGVVNGL…SDVLASVWEG (231 aa)). Active-site residues include S789 and K832. The short motif at 933 to 935 (ARI) is the Microbody targeting signal element.

It belongs to the peptidase S16 family.

Its subcellular location is the peroxisome matrix. The catalysed reaction is Hydrolysis of proteins in presence of ATP.. In terms of biological role, ATP-dependent serine protease that mediates the selective degradation of misfolded and unassembled polypeptides in the peroxisomal matrix. Necessary for type 2 peroxisome targeting signal (PTS2)-containing protein processing and facilitates peroxisome matrix protein import. The polypeptide is Lon protease homolog 2, peroxisomal (PLN) (Pichia angusta (Yeast)).